We begin with the raw amino-acid sequence, 231 residues long: DNA mismatch repair protein MutH (231 aa).

This sequence belongs to the MutH family.

The protein resides in the cytoplasm. Functionally, sequence-specific endonuclease that cleaves unmethylated GATC sequences. It is involved in DNA mismatch repair. This Klebsiella pneumoniae (strain 342) protein is DNA mismatch repair protein MutH.